Reading from the N-terminus, the 175-residue chain is Co-chaperone protein HscB homolog (175 aa).

A J domain is found at 7–79 (SHFELFHLPA…LKRATYLLHL (73 aa)).

The protein belongs to the HscB family. In terms of assembly, interacts with HscA and stimulates its ATPase activity.

Co-chaperone involved in the maturation of iron-sulfur cluster-containing proteins. Seems to help targeting proteins to be folded toward HscA. The chain is Co-chaperone protein HscB homolog from Burkholderia thailandensis (strain ATCC 700388 / DSM 13276 / CCUG 48851 / CIP 106301 / E264).